Here is a 99-residue protein sequence, read N- to C-terminus: Aspartyl/glutamyl-tRNA(Asn/Gln) amidotransferase subunit C (99 aa).

The protein belongs to the GatC family. In terms of assembly, heterotrimer of A, B and C subunits.

The enzyme catalyses L-glutamyl-tRNA(Gln) + L-glutamine + ATP + H2O = L-glutaminyl-tRNA(Gln) + L-glutamate + ADP + phosphate + H(+). It carries out the reaction L-aspartyl-tRNA(Asn) + L-glutamine + ATP + H2O = L-asparaginyl-tRNA(Asn) + L-glutamate + ADP + phosphate + 2 H(+). Allows the formation of correctly charged Asn-tRNA(Asn) or Gln-tRNA(Gln) through the transamidation of misacylated Asp-tRNA(Asn) or Glu-tRNA(Gln) in organisms which lack either or both of asparaginyl-tRNA or glutaminyl-tRNA synthetases. The reaction takes place in the presence of glutamine and ATP through an activated phospho-Asp-tRNA(Asn) or phospho-Glu-tRNA(Gln). The chain is Aspartyl/glutamyl-tRNA(Asn/Gln) amidotransferase subunit C from Burkholderia mallei (strain NCTC 10247).